A 672-amino-acid polypeptide reads, in one-letter code: Iron-phytosiderophore transporter YSL15 (672 aa).

Residues 1–11 are compositionally biased toward basic and acidic residues; that stretch reads MEHADADRTRV. A disordered region spans residues 1–27; sequence MEHADADRTRVAPEIGSLHDEDAEADP. The next 14 membrane-spanning stretches (helical) occupy residues 47–67, 70–90, 115–135, 158–178, 218–238, 279–299, 325–345, 390–410, 418–438, 450–470, 504–524, 556–576, 602–622, and 630–650; these read GVVA…KIAL, GLVP…LRGW, CAVA…LLGL, GIGW…LSLI, LHGF…QWFY, LVNL…WPLI, FLCI…VTGV, MAYS…PIMF, VIIA…GAGL, IALF…AGLV, VGEL…FMLF, ISAL…FAVL, FLVG…LFAW, and AAFM…IWTF.

It belongs to the YSL (TC 2.A.67.2) family. Expressed in root phloem and at low levels in the shoot companion cells.

The protein localises to the cell membrane. In terms of biological role, involved in Fe(3+) uptake from the rhizosphere and phloem transport of iron. Plays an important role in iron homeostasis during the early stages of growth. Transports Fe(3+)-phytosiderophore, but not Fe(3+)- or Fe(2+)-nicotianamine. May not transport other chelated metals. The protein is Iron-phytosiderophore transporter YSL15 (YSL15) of Oryza sativa subsp. japonica (Rice).